The sequence spans 39 residues: MKVRPSVKKMCEHCKIVKRNGRVMVICSANPKHKQRQGK.

Belongs to the bacterial ribosomal protein bL36 family.

This Limosilactobacillus reuteri (strain DSM 20016) (Lactobacillus reuteri) protein is Large ribosomal subunit protein bL36.